A 495-amino-acid chain; its full sequence is Probable cytosol aminopeptidase (495 aa).

Positions 266 and 271 each coordinate Mn(2+). Residue lysine 278 is part of the active site. Aspartate 289, aspartate 348, and glutamate 350 together coordinate Mn(2+). Arginine 352 is an active-site residue.

Belongs to the peptidase M17 family. It depends on Mn(2+) as a cofactor.

It localises to the cytoplasm. It catalyses the reaction Release of an N-terminal amino acid, Xaa-|-Yaa-, in which Xaa is preferably Leu, but may be other amino acids including Pro although not Arg or Lys, and Yaa may be Pro. Amino acid amides and methyl esters are also readily hydrolyzed, but rates on arylamides are exceedingly low.. The enzyme catalyses Release of an N-terminal amino acid, preferentially leucine, but not glutamic or aspartic acids.. Presumably involved in the processing and regular turnover of intracellular proteins. Catalyzes the removal of unsubstituted N-terminal amino acids from various peptides. The protein is Probable cytosol aminopeptidase of Pseudomonas aeruginosa (strain UCBPP-PA14).